The following is a 279-amino-acid chain: MTSSDYDPASEGAETDFSRRMSYGDYLALDAILGAQHPLSEAHDEMLFIIQHQTTELWMRLAIHELSAARRAIARDEVQPAMKMLARMSRIFEQLNNAWDVLRTMTPSEYTRFRSQLGQSSGFQSRQYRLIEYLLGNRNHAMLKPHAHDAEVTKLLEAELATPSLYDEVLRLADRNGLTMPAAVLSRDVRETHSFNEGVLQAWRVVYEAPETHWMLYELAEKLVDFEDYFRRWRFNHVTTVERVIGFKRGTGGTGGVSYLKRMLEVELFPELWRVRTIL.

Residues 48–52 (FIIQH), Tyr110, and Arg114 each bind substrate. His237 lines the heme pocket. Thr251 contacts substrate.

This sequence belongs to the tryptophan 2,3-dioxygenase family. In terms of assembly, homotetramer. Requires heme as cofactor.

The catalysed reaction is L-tryptophan + O2 = N-formyl-L-kynurenine. Its pathway is amino-acid degradation; L-tryptophan degradation via kynurenine pathway; L-kynurenine from L-tryptophan: step 1/2. In terms of biological role, heme-dependent dioxygenase that catalyzes the oxidative cleavage of the L-tryptophan (L-Trp) pyrrole ring and converts L-tryptophan to N-formyl-L-kynurenine. Catalyzes the oxidative cleavage of the indole moiety. The protein is Tryptophan 2,3-dioxygenase of Bradyrhizobium diazoefficiens (strain JCM 10833 / BCRC 13528 / IAM 13628 / NBRC 14792 / USDA 110).